The chain runs to 170 residues: MKTQRHGPSLGRWSLVLLLLGLVMPLAIVAQVLSYQEAVLRALDGINQRSSDANLYRLLDLDPRPTMDGDPDTPKPVSFTVKETVCPRTTQKSPQDCDFKEDGLVKRCVGTVILNQARDSFDISCDKDNRRFARLGNFFRKAKEKIGRGLKKIGQKIKDFWGNLVPRTES.

The first 30 residues, 1–30 (MKTQRHGPSLGRWSLVLLLLGLVMPLAIVA), serve as a signal peptide directing secretion. A propeptide spans 31 to 131 (QVLSYQEAVL…DISCDKDNRR (101 aa)) (cathelin-like domain (CLD)). Intrachain disulfides connect C86-C97 and C108-C125. Residues 150–162 (LKKIGQKIKDFWG) form an active core region.

The protein belongs to the cathelicidin family. Monomer, homodimer or homotrimer (in vitro). Oligomerizes as tetra- or hexamer in solution (in vitro). Proteolytically cleaved by proteinase PRTN3 into antibacterial peptide LL-37. Proteolytically cleaved by cathepsin CTSG and neutrophil elastase ELANE. In terms of processing, resistant to proteolytic degradation in solution, and when bound to both zwitterionic (mimicking mammalian membranes) and negatively charged membranes (mimicking bacterial membranes). Post-translationally, after secretion onto the skin surface, the CAMP gene product is processed by a serine protease-dependent mechanism into multiple novel antimicrobial peptides distinct from and shorter than cathelicidin LL-37. These peptides show enhanced antimicrobial action, acquiring the ability to kill skin pathogens such as S.aureus, E.coli and C.albicans. These peptides have lost the ability to stimulate CXCL8/IL8 release from keratinocytes. The peptides act synergistically, killing bacteria at lower concentrations when present together, and maintain activity at increased salt condition.

Its subcellular location is the secreted. The protein localises to the vesicle. In terms of biological role, antimicrobial protein that is an integral component of the innate immune system. Binds to bacterial lipopolysaccharides (LPS). Acts via neutrophil N-formyl peptide receptors to enhance the release of CXCL2. Postsecretory processing generates multiple cathelicidin antimicrobial peptides with various lengths which act as a topical antimicrobial defense in sweat on skin. The unprocessed precursor form, cathelicidin antimicrobial peptide, inhibits the growth of Gram-negative E.coli and E.aerogenes with efficiencies comparable to that of the mature peptide LL-37 (in vitro). Antimicrobial peptide that is an integral component of the innate immune system. Binds to bacterial lipopolysaccharides (LPS). Causes membrane permeabilization by forming transmembrane pores (in vitro). Causes lysis of E.coli. Exhibits antimicrobial activity against Gram-negative bacteria such as P.aeruginosa, S.typhimurium, E.aerogenes, E.coli and P.syringae, Gram-positive bacteria such as L.monocytogenes, S.epidermidis, S.pyogenes and S.aureus, as well as vancomycin-resistant enterococci (in vitro). Exhibits antimicrobial activity against methicillin-resistant S.aureus, P.mirabilis, and C.albicans in low-salt media, but not in media containing 100 mM NaCl (in vitro). Forms chiral supramolecular assemblies with quinolone signal (PQS) molecules of P.aeruginosa, which may lead to interference of bacterial quorum signaling and perturbance of bacterial biofilm formation. May form supramolecular fiber-like assemblies on bacterial membranes. Induces cytokine and chemokine producation as well as TNF/TNFA and CSF2/GMCSF production in normal human keratinocytes. Exhibits hemolytic activity against red blood cells. Its function is as follows. Exhibits antimicrobial activity against E.coli and B.megaterium (in vitro). The protein is Cathelicidin antimicrobial peptide of Trachypithecus cristatus (Silvered leaf-monkey).